Here is a 427-residue protein sequence, read N- to C-terminus: Peptidase B (427 aa).

Mn(2+) contacts are provided by Lys195 and Asp200. Residue Lys207 is part of the active site. Residues Asp218, Asp277, and Glu279 each coordinate Mn(2+). The active site involves Arg281.

The protein belongs to the peptidase M17 family. In terms of assembly, homohexamer. Requires Mn(2+) as cofactor.

The protein localises to the cytoplasm. It catalyses the reaction Release of an N-terminal amino acid, Xaa, from a peptide or arylamide. Xaa is preferably Glu or Asp but may be other amino acids, including Leu, Met, His, Cys and Gln.. Probably plays an important role in intracellular peptide degradation. The chain is Peptidase B from Salmonella typhi.